The chain runs to 317 residues: Glutamyl-tRNA reductase-binding protein, chloroplastic (317 aa).

The N-terminal 42 residues, 1 to 42 (MQLQTQSFALNLLPSPNFAKPIERREFISLKRDPSRPISLRC), are a transit peptide targeting the chloroplast.

Interacts with HEMA1 and forms a heterotetramer of two GLUTRBP and two HEMA1 subunits.

It localises to the plastid. Its subcellular location is the chloroplast stroma. Functionally, involved in the regulation of glutamyl-tRNA reductase (GluTR) which is important for the synthesis and distribution of 5-aminolevulinate, a precursor in heme and chlorophyll biosynthesis. Stimulates GluTR activity and regulates glutamate-1-semialdehyde release. May play a role in heme metabolism. Necessary for efficient photosynthetic electron transport in chloroplasts. In Arabidopsis thaliana (Mouse-ear cress), this protein is Glutamyl-tRNA reductase-binding protein, chloroplastic.